A 4293-amino-acid chain; its full sequence is Polycystin-1 (4293 aa).

Positions 1-23 are cleaved as a signal peptide; the sequence is MPLGAPALLALALGLGLWLGALA. One can recognise an LRRNT domain in the interval 24-67; that stretch reads GDPGRGCGPCPLPCFCGPAPDAACRVNCSGRWLQTLGPSLRIPA. Residues 24–3066 are Extracellular-facing; that stretch reads GDPGRGCGPC…IFPEPSASIN (3043 aa). Residues N50 and N89 are each glycosylated (N-linked (GlcNAc...) asparagine). LRR repeat units lie at residues 68–91 and 92–113; these read DATA…VNLS and ALVE…VFAN. N-linked (GlcNAc...) asparagine glycans are attached at residues N116 and N121. The region spanning 125–178 is the LRRCT domain; it reads NPFECNCGLAWLPRWAKEHQVHVVQSEATTCRGPIPLAGQPLLSIPLLDNACGE. Residues 177-271 enclose the WSC domain; sequence GEEYVACLPD…PTLLQHTFPA (95 aa). Residues N187 and N239 are each glycosylated (N-linked (GlcNAc...) asparagine). The region spanning 272 to 359 is the PKD 1 domain; sequence SPGATLVGPH…VQVEATPTVL (88 aa). N-linked (GlcNAc...) asparagine glycosylation occurs at N370. One can recognise a C-type lectin domain in the interval 415-530; that stretch reads GNGHCYRLVA…CSAPHSYVCE (116 aa). 2 cysteine pairs are disulfide-bonded: C436-C529 and C507-C521. The tract at residues 613–632 is disordered; the sequence is GGAAAVPEGSSEPDNRTEPA. N627 carries N-linked (GlcNAc...) asparagine glycosylation. The 34-residue stretch at 633-666 folds into the LDL-receptor class A; atypical domain; it reads PKCVPEELWCPGANVCIPFDASCNSHVCINGSVS. Disulfide bonds link C635–C648 and C642–C660. Residues N662, N740, N804, N835, N848, N859, N884, N915, N998, N1004, N1028, N1084, N1096, N1107, N1172, N1188, N1234, N1263, N1330, N1342, N1376, N1444, N1449, N1468, N1535, N1548, N1557, N1643, N1657, N1706, N1730, N1788, N1831, N1863, and N1876 are each glycosylated (N-linked (GlcNAc...) asparagine). PKD domains follow at residues 849–922, 929–1014, 1017–1123, 1121–1209, 1207–1292, 1288–1377, 1376–1463, 1462–1545, 1544–1629, 1630–1718, 1716–1802, 1804–1886, 1885–1970, 1972–2053, and 2056–2144; these read ATAT…RVTA, LRAV…NKMH, WVSA…LPNV, PNVA…LHGL, HGLT…EVLH, LEVL…IRNI, NITL…VLVT, VTGI…VRGL, GLTI…IEGL, QVAG…VESL, ESLI…VGGL, IRTS…IVNL, NLML…VVGL, VPNC…MVEV, and IIQY…ACRE. N-linked (GlcNAc...) asparagine glycans are attached at residues N1987, N2046, N2070, N2121, N2244, N2349, N2391, N2408, N2414, N2563, N2640, N2713, N2749, N2813, N2836, N2873, N2948, and N2986. Residues 2142–2828 enclose the REJ domain; it reads CREPEVEVAL…QLIFLVDSNP (687 aa). A GAIN-B domain is found at 2857–3055; that stretch reads PIEQLAAERA…SLFVPPSHVQ (199 aa). A disulfide bond links C3007 and C3035. Residues 3007–3055 are GPS; it reads CQYFSEEMMMWRTEGIVPLEETSPSQAVCLTRHLTAFGASLFVPPSHVQ. The chain crosses the membrane as a helical span at residues 3067 to 3087; it reads YIVLLTCVICLVTYVVMAMIL. Over 3088 to 3269 the chain is Cytoplasmic; it reads RKLDQLDVSR…DRPPRSRFTR (182 aa). A PLAT domain is found at 3110 to 3225; it reads FKYEILVKTG…EANGGLVEKE (116 aa). Residues 3270 to 3290 form a helical membrane-spanning segment; that stretch reads VQRVTCCVLLLCLFLAANAVW. Topologically, residues 3291-3315 are extracellular; sequence YGVVRDTTYSMGPVSSLISPGVDTV. The helical transmembrane segment at 3316 to 3336 threads the bilayer; the sequence is AIGLVSSVVVYPVYLAVLFLF. Topologically, residues 3337-3549 are cytoplasmic; the sequence is RMSRSKVSGD…LPAWCAPLAH (213 aa). The helical transmembrane segment at 3550–3570 threads the bilayer; it reads GLSLLLVAVAVAVSGWIGASF. Residues 3571–3572 are Extracellular-facing; it reads PP. The helical transmembrane segment at 3573 to 3593 threads the bilayer; the sequence is SVSVMWLLSSSSSFLASFLGW. Residues 3594-3655 lie on the Cytoplasmic side of the membrane; the sequence is EPLKVLLEAL…LAKEEARKVK (62 aa). Residues 3656–3676 form a helical membrane-spanning segment; sequence RLHDMLKRLLVYMLFLLVTLL. The Extracellular segment spans residues 3677-3891; sequence ANYGDASCHG…RLSTGLSLPL (215 aa). N-linked (GlcNAc...) asparagine glycans are attached at residues N3728 and N3780. A helical transmembrane segment spans residues 3892 to 3912; that stretch reads LTSVCLLLFALYFSMAEVQTW. Topologically, residues 3913-3925 are cytoplasmic; sequence RKDGCACTARPDT. The chain crosses the membrane as a helical span at residues 3926 to 3946; sequence WARCLLVILTAATGLVRLAQL. Residues 3947-3974 are Extracellular-facing; it reads GIADRQWTHFVQDHPRHFTSFDQVAQLG. Residues 3975–3995 form a helical membrane-spanning segment; sequence SVARGLAASLLFLLLVKAAQQ. The Cytoplasmic portion of the chain corresponds to 3996 to 4017; it reads LRFVRQWSVFGKTLCRALPELM. Residues 4018-4038 traverse the membrane as a helical segment; the sequence is GATLGLVLLGVAYAQMAILLI. The Extracellular segment spans residues 4039 to 4080; sequence SSGADTLYNMARAFLVLCPGARVPTLCPSESWYLSPLLCVGL. A helical transmembrane segment spans residues 4081-4100; the sequence is WALRVWGALRLGAILLRWRY. At 4101-4293 the chain is on the cytoplasmic side; sequence HALRGELYRP…PNNKVHPSST (193 aa). Disordered regions lie at residues 4150 to 4197 and 4235 to 4293; these read PLPS…STLK and SLQG…PSST. Over residues 4153–4172 the composition is skewed to low complexity; the sequence is SRSSRGSKSSPVVLPPSSGS. Position 4156 is a phosphoserine; by PRKX; in vitro (S4156). Over residues 4173–4195 the composition is skewed to polar residues; the sequence is EASHPSTSSSQPDGPSASLSRST. The stretch at 4210–4241 forms a coiled coil; it reads ESLLVQFDRLNQATEDVYQLEQQLQSLQGHGH. The span at 4238–4256 shows a compositional bias: low complexity; sequence GHGHNGPPSSPSPGCFPGS. The span at 4265-4276 shows a compositional bias: polar residues; it reads SRASQGLDQTVG.

This sequence belongs to the polycystin family. As to quaternary structure, component of the heterotetrameric polycystin channel complex with PKD2; the tetramer contains one PKD1 chain and three PKD2 chains. Interacts with PKD2; the interaction is required for ciliary localization. Interacts with PKD2L1. Interacts with PRKX; involved in differentiation and controlled morphogenesis of the kidney. Interacts (via extracellular domain) with WNT3A, WNT4 and WNT9B. Interacts with WNT5A, DVL1 and DVL2. Interacts with NPHP1 (via SH3 domain). Interacts with BBS1, BBS4, BBS5 and TTC8. Interacts with RGS7. Interacts (via C-terminal domain) with RABEP1; the interaction connects PKD1:PKD2 to GGA1 and ARL3 that mediate the ciliary targeting. Interacts (via the PKD repeats in the N-terminal extracellular region) with EPCIP; the interaction is not dependent on N-glycosylation of either protein. In terms of processing, N-glycosylated. After synthesis, undergoes autoproteolytic cleavage between Leu-3040 and Thr-3041 in the GPS region of the GAIN-B domain. Cleavage at the GPS region occurs through a cis-autoproteolytic mechanism involving an ester-intermediate via N-O acyl rearrangement. This process takes place in the early secretory pathway, depends on initial N-glycosylation, and requires the REJ domain. PKD1 is ubiquitously and incompletely cleaved in wild-type mice, so that uncleaved and cleaved PKD1 molecules coexist. The differential patterns of cleavage during embryonic development, as well as in adult mice, suggest different functions of uncleaved and cleaved molecules.

Its subcellular location is the cell membrane. It localises to the cell projection. The protein localises to the cilium. The protein resides in the endoplasmic reticulum. It is found in the golgi apparatus. Its subcellular location is the vesicle. It localises to the secreted. The protein localises to the extracellular exosome. In terms of biological role, component of a heteromeric calcium-permeable ion channel formed by PKD1 and PKD2 that is activated by interaction between PKD1 and a Wnt family member, such as WNT3A and WNT9B. Both PKD1 and PKD2 are required for channel activity. Involved in renal tubulogenesis. Involved in fluid-flow mechanosensation by the primary cilium in renal epithelium. Acts as a regulator of cilium length, together with PKD2. The dynamic control of cilium length is essential in the regulation of mechanotransductive signaling. The cilium length response creates a negative feedback loop whereby fluid shear-mediated deflection of the primary cilium, which decreases intracellular cAMP, leads to cilium shortening and thus decreases flow-induced signaling. May be an ion-channel regulator. Involved in adhesive protein-protein and protein-carbohydrate interactions. Likely to be involved with polycystin-1-interacting protein 1 in the detection, sequestration and exocytosis of senescent mitochondria. In Mus musculus (Mouse), this protein is Polycystin-1.